A 476-amino-acid chain; its full sequence is Siroheme synthase (476 aa).

Residues 1-207 are precorrin-2 dehydrogenase /sirohydrochlorin ferrochelatase; it reads MTANALFPLF…QRHAEAEAVL (207 aa). Residues 25–26 and 46–47 contribute to the NAD(+) site; these read KV and PS. A Phosphoserine modification is found at Ser132. A uroporphyrinogen-III C-methyltransferase region spans residues 220–476; sequence GSVTLVGAGA…SAPCPPARIL (257 aa). Asp252 functions as the Proton acceptor in the catalytic mechanism. The active-site Proton donor is the Lys274. S-adenosyl-L-methionine is bound by residues 305–307, Val310, 335–336, Met387, and Gly416; these read GGD and TA.

In the N-terminal section; belongs to the precorrin-2 dehydrogenase / sirohydrochlorin ferrochelatase family. This sequence in the C-terminal section; belongs to the precorrin methyltransferase family.

The enzyme catalyses uroporphyrinogen III + 2 S-adenosyl-L-methionine = precorrin-2 + 2 S-adenosyl-L-homocysteine + H(+). It carries out the reaction precorrin-2 + NAD(+) = sirohydrochlorin + NADH + 2 H(+). The catalysed reaction is siroheme + 2 H(+) = sirohydrochlorin + Fe(2+). The protein operates within cofactor biosynthesis; adenosylcobalamin biosynthesis; precorrin-2 from uroporphyrinogen III: step 1/1. It functions in the pathway cofactor biosynthesis; adenosylcobalamin biosynthesis; sirohydrochlorin from precorrin-2: step 1/1. Its pathway is porphyrin-containing compound metabolism; siroheme biosynthesis; precorrin-2 from uroporphyrinogen III: step 1/1. It participates in porphyrin-containing compound metabolism; siroheme biosynthesis; siroheme from sirohydrochlorin: step 1/1. The protein operates within porphyrin-containing compound metabolism; siroheme biosynthesis; sirohydrochlorin from precorrin-2: step 1/1. Functionally, multifunctional enzyme that catalyzes the SAM-dependent methylations of uroporphyrinogen III at position C-2 and C-7 to form precorrin-2 via precorrin-1. Then it catalyzes the NAD-dependent ring dehydrogenation of precorrin-2 to yield sirohydrochlorin. Finally, it catalyzes the ferrochelation of sirohydrochlorin to yield siroheme. The sequence is that of Siroheme synthase from Xylella fastidiosa (strain M12).